The primary structure comprises 374 residues: Serpin B8 (374 aa).

Belongs to the serpin family. Ov-serpin subfamily.

It is found in the cytoplasm. In terms of biological role, has an important role in epithelial desmosome-mediated cell-cell adhesion. The sequence is that of Serpin B8 (SERPINB8) from Bos taurus (Bovine).